We begin with the raw amino-acid sequence, 373 residues long: Dual-specificity RNA methyltransferase RlmN (373 aa).

The active-site Proton acceptor is the Glu94. The 240-residue stretch at 100–339 (EDDRATLCVS…VIVRKTRGDD (240 aa)) folds into the Radical SAM core domain. Cys107 and Cys344 are joined by a disulfide. [4Fe-4S] cluster-binding residues include Cys114, Cys118, and Cys121. Residues 168–169 (GE), Ser200, 222–224 (SIH), and Asn301 contribute to the S-adenosyl-L-methionine site. The active-site S-methylcysteine intermediate is Cys344.

This sequence belongs to the radical SAM superfamily. RlmN family. The cofactor is [4Fe-4S] cluster.

The protein localises to the cytoplasm. The catalysed reaction is adenosine(2503) in 23S rRNA + 2 reduced [2Fe-2S]-[ferredoxin] + 2 S-adenosyl-L-methionine = 2-methyladenosine(2503) in 23S rRNA + 5'-deoxyadenosine + L-methionine + 2 oxidized [2Fe-2S]-[ferredoxin] + S-adenosyl-L-homocysteine. It carries out the reaction adenosine(37) in tRNA + 2 reduced [2Fe-2S]-[ferredoxin] + 2 S-adenosyl-L-methionine = 2-methyladenosine(37) in tRNA + 5'-deoxyadenosine + L-methionine + 2 oxidized [2Fe-2S]-[ferredoxin] + S-adenosyl-L-homocysteine. Its function is as follows. Specifically methylates position 2 of adenine 2503 in 23S rRNA and position 2 of adenine 37 in tRNAs. m2A2503 modification seems to play a crucial role in the proofreading step occurring at the peptidyl transferase center and thus would serve to optimize ribosomal fidelity. The chain is Dual-specificity RNA methyltransferase RlmN from Shewanella baltica (strain OS223).